The sequence spans 636 residues: Probable potassium transport system protein Kup (636 aa).

The next 12 helical transmembrane spans lie at 22–42, 64–84, 115–135, 150–170, 182–202, 220–240, 261–281, 293–313, 351–371, 383–403, 408–428, and 433–453; these read VGLL…SPLY, ILSL…VMFI, LMVI…MITP, FDGI…ALFL, LFGP…VHGI, FFVV…LALT, WFIL…ALLL, LLAP…ATVI, IYIG…VIGF, VAVT…MLLL, PLLA…FFAA, and IVQG…LMST.

This sequence belongs to the HAK/KUP transporter (TC 2.A.72) family.

It is found in the cell inner membrane. It catalyses the reaction K(+)(in) + H(+)(in) = K(+)(out) + H(+)(out). Transport of potassium into the cell. Likely operates as a K(+):H(+) symporter. The polypeptide is Probable potassium transport system protein Kup (Pseudomonas putida (strain ATCC 700007 / DSM 6899 / JCM 31910 / BCRC 17059 / LMG 24140 / F1)).